A 658-amino-acid polypeptide reads, in one-letter code: Outer dynein arm-docking complex subunit 1 (658 aa).

Coiled-coil stretches lie at residues 11–156, 186–234, and 303–380; these read KEVH…RYLN, REEA…KNDE, and NFIN…TDIQ. Disordered regions lie at residues 496–552 and 574–658; these read DEEE…SVSH and GAPV…RGYN. Phosphoserine is present on residues S500, S506, S507, and S509. 4 stretches are compositionally biased toward low complexity: residues 506-519, 574-583, 592-604, and 621-639; these read SSPS…QISL, GAPVSSRSSQ, TSSS…TGYL, and SMGS…HASS.

It belongs to the ODA1/DCC2 family. In terms of assembly, component of the outer dynein arm-docking complex along with ODAD2, ODAD3, ODAD4 and CLXN. Interacts with ODAD3. Interacts with ODAD4; this interaction may facilitate the recruitment and/or attachment of outer dynein arm docking complex proteins including ODAD1, ODAD3, and ODAD4 to ciliary axonemes. Interacts with DNAH9. Interacts with MNS1. Interacts with PIERCE1 and PIERCE2; the interactions link the outer dynein arms docking complex (ODA-DC) to the internal microtubule inner proteins (MIP) in cilium axoneme. As to expression, expressed in motile ciliated tissues.

The protein resides in the cytoplasm. The protein localises to the cytoskeleton. It localises to the cilium axoneme. Its function is as follows. Component of the outer dynein arm-docking complex that mediates outer dynein arms (ODA) binding onto the doublet microtubule. Involved in mediating assembly of both ODAs and their axonemal docking complex onto ciliary microtubules. This Mus musculus (Mouse) protein is Outer dynein arm-docking complex subunit 1 (Odad1).